A 162-amino-acid polypeptide reads, in one-letter code: Urease subunit beta (162 aa).

Residues 116–162 form a disordered region; that stretch reads WRRSSAAGDAPQELPQVEAAERGRKLDDATDVDTNVGTEEGFEEGRN. The segment covering 134-143 has biased composition (basic and acidic residues); that stretch reads AAERGRKLDD.

It belongs to the urease beta subunit family. As to quaternary structure, heterotrimer of UreA (gamma), UreB (beta) and UreC (alpha) subunits. Three heterotrimers associate to form the active enzyme.

The protein resides in the cytoplasm. The enzyme catalyses urea + 2 H2O + H(+) = hydrogencarbonate + 2 NH4(+). It functions in the pathway nitrogen metabolism; urea degradation; CO(2) and NH(3) from urea (urease route): step 1/1. The protein is Urease subunit beta of Corynebacterium glutamicum (strain ATCC 13032 / DSM 20300 / JCM 1318 / BCRC 11384 / CCUG 27702 / LMG 3730 / NBRC 12168 / NCIMB 10025 / NRRL B-2784 / 534).